Consider the following 554-residue polypeptide: MAFNKQAESKKPNFLVIVADDLGWSDVSPFGSEIHTPNIERLAKEGVRLTNFHTASACSPTRSMLLSGTDNHIAGLGQMAETVRRFSKVWGGKPGYEGYLNDRVAALPEILQEAGYYTTMSGKWHLGLTPDRYPSKRGFKESFALLPGGGNHFAYEPGTRENPAVPFLPPLYTHNHDPVDHKSLKNFYSSNYFAEKLIDQLKNREKSQSFFAYLPFTAPHWPLQSPKEYINKYRGRYSEGPDVLRKNRLQAQKDLGLIPENVIPAPVDGMGTKSWDELTTEEKEFSARTMEVYAAMVELLDLNIGRVIDYLKTIGELDNTFVIFMSDNGAEGSVLEAIPVLSTKPPVKYFDNSLENLGNYNSFIWYGPRWAQAATAPSRLSKGFITEGGIRCPAIIRYPPLIKPDIISDEFVTVMDILPTILELAEVPHPGHKFQGRDVVIPRGKPWIDHFVHGKPVHKDTDFSGWELFGQRAIRKGNYKAIYVPKEGIKTEWELYDLSQDKGELENLAKVHPDILNELIEYWLVYEAETGVVTAPDDFVAENVGLFKPAKHNL.

2 residues coordinate Ca(2+): D327 and N328.

This sequence belongs to the sulfatase family. The cofactor is Ca(2+).

It localises to the cytoplasm. It is found in the nucleus. This is an uncharacterized protein from Schizosaccharomyces pombe (strain 972 / ATCC 24843) (Fission yeast).